A 234-amino-acid chain; its full sequence is Probable septum site-determining protein MinC (234 aa).

It belongs to the MinC family. In terms of assembly, interacts with MinD and FtsZ.

Cell division inhibitor that blocks the formation of polar Z ring septums. Rapidly oscillates between the poles of the cell to destabilize FtsZ filaments that have formed before they mature into polar Z rings. Prevents FtsZ polymerization. The polypeptide is Probable septum site-determining protein MinC (Buchnera aphidicola subsp. Baizongia pistaciae (strain Bp)).